A 252-amino-acid chain; its full sequence is PF03932 family protein CutC (252 aa).

This sequence belongs to the CutC family.

Its subcellular location is the cytoplasm. This Sodalis glossinidius (strain morsitans) protein is PF03932 family protein CutC.